We begin with the raw amino-acid sequence, 445 residues long: Histidinol dehydrogenase (445 aa).

Positions 134, 198, and 226 each coordinate NAD(+). Substrate-binding residues include threonine 249, glutamine 271, and histidine 274. Zn(2+) contacts are provided by glutamine 271 and histidine 274. Catalysis depends on proton acceptor residues glutamate 340 and histidine 341. Substrate contacts are provided by histidine 341, aspartate 374, glutamate 428, and histidine 433. Residue aspartate 374 participates in Zn(2+) binding. Residue histidine 433 coordinates Zn(2+).

The protein belongs to the histidinol dehydrogenase family. It depends on Zn(2+) as a cofactor.

The catalysed reaction is L-histidinol + 2 NAD(+) + H2O = L-histidine + 2 NADH + 3 H(+). Its pathway is amino-acid biosynthesis; L-histidine biosynthesis; L-histidine from 5-phospho-alpha-D-ribose 1-diphosphate: step 9/9. Functionally, catalyzes the sequential NAD-dependent oxidations of L-histidinol to L-histidinaldehyde and then to L-histidine. The chain is Histidinol dehydrogenase from Nocardia farcinica (strain IFM 10152).